Consider the following 340-residue polypeptide: Dihydroorotate dehydrogenase (quinone) (340 aa).

FMN contacts are provided by residues Ala62–Lys66 and Thr86. Lys66 is a substrate binding site. Substrate is bound at residue Asn111–Phe115. Asn139 and Asn172 together coordinate FMN. Substrate is bound at residue Asn172. Residue Ser175 is the Nucleophile of the active site. Substrate is bound at residue Asn177. 2 residues coordinate FMN: Lys217 and Thr245. Asn246–Thr247 is a substrate binding site. Residues Gly268, Gly297, and Tyr318–Ser319 contribute to the FMN site.

Belongs to the dihydroorotate dehydrogenase family. Type 2 subfamily. Monomer. FMN is required as a cofactor.

The protein resides in the cell membrane. The catalysed reaction is (S)-dihydroorotate + a quinone = orotate + a quinol. It functions in the pathway pyrimidine metabolism; UMP biosynthesis via de novo pathway; orotate from (S)-dihydroorotate (quinone route): step 1/1. Its function is as follows. Catalyzes the conversion of dihydroorotate to orotate with quinone as electron acceptor. In Shewanella woodyi (strain ATCC 51908 / MS32), this protein is Dihydroorotate dehydrogenase (quinone).